The chain runs to 264 residues: Thiazole synthase (264 aa).

Lys106 functions as the Schiff-base intermediate with DXP in the catalytic mechanism. 1-deoxy-D-xylulose 5-phosphate is bound by residues Gly167, 193-194, and 215-216; these read AG and NT.

The protein belongs to the ThiG family. Homotetramer. Forms heterodimers with either ThiH or ThiS.

Its subcellular location is the cytoplasm. It catalyses the reaction [ThiS sulfur-carrier protein]-C-terminal-Gly-aminoethanethioate + 2-iminoacetate + 1-deoxy-D-xylulose 5-phosphate = [ThiS sulfur-carrier protein]-C-terminal Gly-Gly + 2-[(2R,5Z)-2-carboxy-4-methylthiazol-5(2H)-ylidene]ethyl phosphate + 2 H2O + H(+). Its pathway is cofactor biosynthesis; thiamine diphosphate biosynthesis. Functionally, catalyzes the rearrangement of 1-deoxy-D-xylulose 5-phosphate (DXP) to produce the thiazole phosphate moiety of thiamine. Sulfur is provided by the thiocarboxylate moiety of the carrier protein ThiS. In vitro, sulfur can be provided by H(2)S. The chain is Thiazole synthase from Xylella fastidiosa (strain 9a5c).